The chain runs to 502 residues: ATP synthase subunit alpha (502 aa).

169–176 (GDRQTGKT) contacts ATP.

It belongs to the ATPase alpha/beta chains family. As to quaternary structure, F-type ATPases have 2 components, CF(1) - the catalytic core - and CF(0) - the membrane proton channel. CF(1) has five subunits: alpha(3), beta(3), gamma(1), delta(1), epsilon(1). CF(0) has three main subunits: a(1), b(2) and c(9-12). The alpha and beta chains form an alternating ring which encloses part of the gamma chain. CF(1) is attached to CF(0) by a central stalk formed by the gamma and epsilon chains, while a peripheral stalk is formed by the delta and b chains.

The protein localises to the cell inner membrane. The enzyme catalyses ATP + H2O + 4 H(+)(in) = ADP + phosphate + 5 H(+)(out). Functionally, produces ATP from ADP in the presence of a proton gradient across the membrane. The alpha chain is a regulatory subunit. The chain is ATP synthase subunit alpha from Kosmotoga olearia (strain ATCC BAA-1733 / DSM 21960 / TBF 19.5.1).